A 552-amino-acid chain; its full sequence is MRRLTRRLVLPVFGVLWITVLLFFWVTKRKLEVPTGPEVQTPKPSDADWDDLWDQFDERRYLNAKKWRVGDDPYKLYAFNQRESERISSNRAIPDTRHLRCTLLVYCTDLPPTSIIITFHNEARSTLLRTIRSVLNRTPTHLIREIILVDDFSNDPDDCKQLIKLPKVKCLRNNERQGLVRSRIRGADIAQGTTLTFLDSHCEVNRDWLQPLLHRVKEDYTRVVCPVIDIINLDTFTYIESASELRGGFDWSLHFQWEQLSPEQKARRLDPTEPIRTPIIAGGLFVIDKAWFDYLGKYDMDMDIWGGENFEISFRVWMCGGSLEIVPCSRVGHVFRKKHPYVFPDGNANTYIKNTKRTAEVWMDEYKQYYYAARPFALERPFGNVESRLDLRKNLRCQSFKWYLENIYPELSIPKESSIQKGNIRQRQKCLESQRQNNQETPNLKLSPCAKVKGEDAKSQVWAFTYTQQILQEELCLSVITLFPGAPVVLVLCKNGDDRQQWTKTGSHIEHIASHLCLDTDMFGDGTENGKEIVVNPCESSLMSQHWDMVSS.

The Cytoplasmic portion of the chain corresponds to 1–6 (MRRLTR). The chain crosses the membrane as a helical; Signal-anchor for type II membrane protein span at residues 7–26 (RLVLPVFGVLWITVLLFFWV). Topologically, residues 27–552 (TKRKLEVPTG…MSQHWDMVSS (526 aa)) are lumenal. Cystine bridges form between cysteine 101–cysteine 328, cysteine 319–cysteine 397, cysteine 430–cysteine 449, cysteine 476–cysteine 493, and cysteine 517–cysteine 538. The tract at residues 110-215 (LPPTSIIITF…RDWLQPLLHR (106 aa)) is catalytic subdomain A. 2 residues coordinate substrate: aspartate 151 and arginine 176. Position 199 (aspartate 199) interacts with Mn(2+). Serine 200 is a substrate binding site. Residue histidine 201 participates in Mn(2+) binding. Residues 274-336 (PIRTPIIAGG…PCSRVGHVFR (63 aa)) form a catalytic subdomain B region. Tryptophan 305 lines the substrate pocket. Histidine 333 contributes to the Mn(2+) binding site. Residues arginine 336, histidine 339, and tyrosine 341 each contribute to the substrate site. The region spanning 415 to 550 (KESSIQKGNI…SLMSQHWDMV (136 aa)) is the Ricin B-type lectin domain.

The protein belongs to the glycosyltransferase 2 family. GalNAc-T subfamily. The cofactor is Mn(2+). In terms of tissue distribution, detected in renal tubules (at protein level). Highly expressed in fetal and adult kidney. Widely expressed at low level. Weakly expressed in whole brain, cerebellum, thymus, lung, mammary gland, liver, stomach, small intestine, colon, pancreas, spleen, bladder, uterus, placenta, testis, ovary, skeletal muscle, leukocyte, B-cell, bone marrow, fetal brain, fetal thymus, fetal lung, fetal liver, fetal small intestine, fetal spleen, fetal skeletal and fetus. Detected in renal tubules (at protein level).

Its subcellular location is the golgi apparatus membrane. The catalysed reaction is L-seryl-[protein] + UDP-N-acetyl-alpha-D-galactosamine = a 3-O-[N-acetyl-alpha-D-galactosaminyl]-L-seryl-[protein] + UDP + H(+). It catalyses the reaction L-threonyl-[protein] + UDP-N-acetyl-alpha-D-galactosamine = a 3-O-[N-acetyl-alpha-D-galactosaminyl]-L-threonyl-[protein] + UDP + H(+). The protein operates within protein modification; protein glycosylation. Its function is as follows. Catalyzes the initial reaction in O-linked oligosaccharide biosynthesis, the transfer of an N-acetyl-D-galactosamine residue to a serine or threonine residue on the protein receptor. Displays activity toward mucin-derived peptide substrates such as Muc2, Muc5AC, Muc7, and Muc13 (-58). May be involved in O-glycosylation in kidney. This chain is Polypeptide N-acetylgalactosaminyltransferase 14 (GALNT14), found in Homo sapiens (Human).